The following is a 363-amino-acid chain: Phosphoserine aminotransferase (363 aa).

Residue Arg42 coordinates L-glutamate. Residues 76–77, Trp102, Thr156, Asp175, and Gln198 each bind pyridoxal 5'-phosphate; that span reads GR. Lys199 is subject to N6-(pyridoxal phosphate)lysine. 240-241 is a binding site for pyridoxal 5'-phosphate; sequence NT.

The protein belongs to the class-V pyridoxal-phosphate-dependent aminotransferase family. SerC subfamily. Homodimer. Requires pyridoxal 5'-phosphate as cofactor.

The protein localises to the cytoplasm. It catalyses the reaction O-phospho-L-serine + 2-oxoglutarate = 3-phosphooxypyruvate + L-glutamate. The catalysed reaction is 4-(phosphooxy)-L-threonine + 2-oxoglutarate = (R)-3-hydroxy-2-oxo-4-phosphooxybutanoate + L-glutamate. Its pathway is amino-acid biosynthesis; L-serine biosynthesis; L-serine from 3-phospho-D-glycerate: step 2/3. It functions in the pathway cofactor biosynthesis; pyridoxine 5'-phosphate biosynthesis; pyridoxine 5'-phosphate from D-erythrose 4-phosphate: step 3/5. Functionally, catalyzes the reversible conversion of 3-phosphohydroxypyruvate to phosphoserine and of 3-hydroxy-2-oxo-4-phosphonooxybutanoate to phosphohydroxythreonine. In Shewanella baltica (strain OS223), this protein is Phosphoserine aminotransferase.